The primary structure comprises 77 residues: Sec-independent protein translocase protein TatA (77 aa).

A helical membrane pass occupies residues 1 to 21 (MGGISIWQLLIIALIVVLLFG). Basic and acidic residues-rich tracts occupy residues 47–56 (EKKALEDKEA) and 65–77 (TEKKPEADKKEQA). A disordered region spans residues 47–77 (EKKALEDKEAAAQTTQQATEKKPEADKKEQA).

Belongs to the TatA/E family. In terms of assembly, the Tat system comprises two distinct complexes: a TatABC complex, containing multiple copies of TatA, TatB and TatC subunits, and a separate TatA complex, containing only TatA subunits. Substrates initially bind to the TatABC complex, which probably triggers association of the separate TatA complex to form the active translocon.

Its subcellular location is the cell inner membrane. In terms of biological role, part of the twin-arginine translocation (Tat) system that transports large folded proteins containing a characteristic twin-arginine motif in their signal peptide across membranes. TatA could form the protein-conducting channel of the Tat system. This Shewanella amazonensis (strain ATCC BAA-1098 / SB2B) protein is Sec-independent protein translocase protein TatA.